A 362-amino-acid polypeptide reads, in one-letter code: Chorismate synthase (362 aa).

Positions 48 and 54 each coordinate NADP(+). FMN contacts are provided by residues 125–127, 238–239, Gly-278, 293–297, and Arg-319; these read RSS, NA, and KPTSS.

The protein belongs to the chorismate synthase family. Homotetramer. FMNH2 serves as cofactor.

The catalysed reaction is 5-O-(1-carboxyvinyl)-3-phosphoshikimate = chorismate + phosphate. It participates in metabolic intermediate biosynthesis; chorismate biosynthesis; chorismate from D-erythrose 4-phosphate and phosphoenolpyruvate: step 7/7. Catalyzes the anti-1,4-elimination of the C-3 phosphate and the C-6 proR hydrogen from 5-enolpyruvylshikimate-3-phosphate (EPSP) to yield chorismate, which is the branch point compound that serves as the starting substrate for the three terminal pathways of aromatic amino acid biosynthesis. This reaction introduces a second double bond into the aromatic ring system. The chain is Chorismate synthase from Aeromonas salmonicida (strain A449).